The sequence spans 369 residues: Transmembrane protein 198 (369 aa).

7 consecutive transmembrane segments (helical) span residues 37-57, 60-80, 93-113, 117-137, 148-168, 181-201, and 216-236; these read VVPSVVCSMCCLFGIIYCFFG, CFKAVLFLTGLMFGSVIIFLL, VEASVGIGLGIGTLCGLVTML, VGLFMVGLLLGLLVGIGTLIG, SVWVPLGVLLGLGMLFAVLTL, VFGAAVIVVATDYFVELFALV, and VCWTTWVVLGAWPALALLGVL. The segment at 266-308 is disordered; sequence RQKEERRESSRKKKRKQPQSAQHTHAAKALHPEPAYRRKPNPI.

The protein belongs to the TMEM198 family.

The protein localises to the membrane. In Danio rerio (Zebrafish), this protein is Transmembrane protein 198 (tmem198ab).